We begin with the raw amino-acid sequence, 130 residues long: Cyclin-dependent kinase 4 inhibitor B (130 aa).

ANK repeat units follow at residues 5-34 (SSDA…DPNA), 38-66 (FGRR…EPNC), 71-100 (TLTR…RLDV), and 104-130 (WGRL…ATGD). Thr-12 is modified (phosphothreonine).

Belongs to the CDKN2 cyclin-dependent kinase inhibitor family. As to quaternary structure, heterodimer of CDKN2B with CDK4 or CDK6. As to expression, expressed ubiquitously.

In terms of biological role, interacts strongly with CDK4 and CDK6. Potent inhibitor. Potential effector of TGF-beta induced cell cycle arrest. The protein is Cyclin-dependent kinase 4 inhibitor B (Cdkn2b) of Mus musculus (Mouse).